Reading from the N-terminus, the 279-residue chain is MKENKKTQFPINKTLSKINKKFLELKKSDKLALMPFIMAGDPNIETTSEILLKLQEKGADLIELGIPYSDPLADGPIIQLSASRALKSGTTLKNVIQLLESLKDKLHIPIILFTYFNPVLNFGLENFCELASKVGVSGLIIPDLPLEEAYKFSEIISSYSIDLILLVAPTTPSERMKIISNNTKGFTYLVSVTGVTGERNKMENRVENLITKLQEISINPVAVGFGISSPEHVNKVRKWGADGVIIGSAFVKRISNSNEKEVVNQIGKFCEEMRKAADQ.

Catalysis depends on proton acceptor residues Glu-63 and Asp-74.

It belongs to the TrpA family. As to quaternary structure, tetramer of two alpha and two beta chains.

It catalyses the reaction (1S,2R)-1-C-(indol-3-yl)glycerol 3-phosphate + L-serine = D-glyceraldehyde 3-phosphate + L-tryptophan + H2O. Its pathway is amino-acid biosynthesis; L-tryptophan biosynthesis; L-tryptophan from chorismate: step 5/5. In terms of biological role, the alpha subunit is responsible for the aldol cleavage of indoleglycerol phosphate to indole and glyceraldehyde 3-phosphate. This Prochlorococcus marinus subsp. pastoris (strain CCMP1986 / NIES-2087 / MED4) protein is Tryptophan synthase alpha chain.